The following is a 214-amino-acid chain: ATP-dependent Clp protease proteolytic subunit 2 (214 aa).

Ser110 acts as the Nucleophile in catalysis. Residue His135 is part of the active site.

This sequence belongs to the peptidase S14 family. Fourteen ClpP subunits assemble into 2 heptameric rings which stack back to back to give a disk-like structure with a central cavity, resembling the structure of eukaryotic proteasomes.

The protein resides in the cytoplasm. The enzyme catalyses Hydrolysis of proteins to small peptides in the presence of ATP and magnesium. alpha-casein is the usual test substrate. In the absence of ATP, only oligopeptides shorter than five residues are hydrolyzed (such as succinyl-Leu-Tyr-|-NHMec, and Leu-Tyr-Leu-|-Tyr-Trp, in which cleavage of the -Tyr-|-Leu- and -Tyr-|-Trp bonds also occurs).. Cleaves peptides in various proteins in a process that requires ATP hydrolysis. Has a chymotrypsin-like activity. Plays a major role in the degradation of misfolded proteins. This chain is ATP-dependent Clp protease proteolytic subunit 2, found in Mycobacterium leprae (strain TN).